The following is a 63-amino-acid chain: Cytochrome c oxidase subunit 7C, mitochondrial (63 aa).

The N-terminal 16 residues, 1 to 16, are a transit peptide targeting the mitochondrion; it reads MLGHSIRRFTTSVVRR. The Mitochondrial matrix segment spans residues 17 to 33; sequence SHYEEGPGKNLPFSVKN. Residue Lys-25 is modified to N6-acetyllysine; alternate. At Lys-25 the chain carries N6-succinyllysine; alternate. The helical transmembrane segment at 34 to 60 threads the bilayer; that stretch reads KWALLVKMSLYFGSAFATPFLIVRHQL. Over 61-63 the chain is Mitochondrial intermembrane; it reads LKQ.

Belongs to the cytochrome c oxidase VIIc family. As to quaternary structure, component of the cytochrome c oxidase (complex IV, CIV), a multisubunit enzyme composed of 14 subunits. The complex is composed of a catalytic core of 3 subunits MT-CO1, MT-CO2 and MT-CO3, encoded in the mitochondrial DNA, and 11 supernumerary subunits COX4I, COX5A, COX5B, COX6A, COX6B, COX6C, COX7A, COX7B, COX7C, COX8 and NDUFA4, which are encoded in the nuclear genome. The complex exists as a monomer or a dimer and forms supercomplexes (SCs) in the inner mitochondrial membrane with NADH-ubiquinone oxidoreductase (complex I, CI) and ubiquinol-cytochrome c oxidoreductase (cytochrome b-c1 complex, complex III, CIII), resulting in different assemblies (supercomplex SCI(1)III(2)IV(1) and megacomplex MCI(2)III(2)IV(2)). Interacts with RAB5IF.

The protein resides in the mitochondrion inner membrane. The protein operates within energy metabolism; oxidative phosphorylation. In terms of biological role, component of the cytochrome c oxidase, the last enzyme in the mitochondrial electron transport chain which drives oxidative phosphorylation. The respiratory chain contains 3 multisubunit complexes succinate dehydrogenase (complex II, CII), ubiquinol-cytochrome c oxidoreductase (cytochrome b-c1 complex, complex III, CIII) and cytochrome c oxidase (complex IV, CIV), that cooperate to transfer electrons derived from NADH and succinate to molecular oxygen, creating an electrochemical gradient over the inner membrane that drives transmembrane transport and the ATP synthase. Cytochrome c oxidase is the component of the respiratory chain that catalyzes the reduction of oxygen to water. Electrons originating from reduced cytochrome c in the intermembrane space (IMS) are transferred via the dinuclear copper A center (CU(A)) of subunit 2 and heme A of subunit 1 to the active site in subunit 1, a binuclear center (BNC) formed by heme A3 and copper B (CU(B)). The BNC reduces molecular oxygen to 2 water molecules using 4 electrons from cytochrome c in the IMS and 4 protons from the mitochondrial matrix. The polypeptide is Cytochrome c oxidase subunit 7C, mitochondrial (COX7C) (Papio hamadryas (Hamadryas baboon)).